Consider the following 1012-residue polypeptide: PHD finger protein 20 (1012 aa).

Tudor domains are found at residues 4 to 69 (HPPN…RPLE) and 83 to 147 (GSSE…GNAR). Residues 142 to 336 (IVGNARPKET…RSSRLSTNGT (195 aa)) are disordered. Over residues 147–245 (RPKETDHKSL…QVDKKPENDI (99 aa)) the composition is skewed to basic and acidic residues. A Phosphoserine modification is found at serine 159. Residues 257 to 269 (KRKRGRPPSIAPT) constitute a DNA-binding region (a.T hook). Residues 271 to 280 (VDSNSQTLQP) are compositionally biased toward polar residues. Basic and acidic residues predominate over residues 297–325 (PLKRPRLDKNSSQEKSKNYSENTDKDLSR). Residues 452–477 (FRCKVVDCLKFFRKAKLLHYHMKYFH) form a C2H2-type zinc finger. A compositionally biased stretch (basic and acidic residues) spans 481–490 (KSLEPEESPG). Positions 481 to 611 (KSLEPEESPG…KGKVKALEED (131 aa)) are disordered. Serine 488 bears the Phosphoserine mark. Positions 497–509 (RGPSASDKPSQET) are enriched in polar residues. A compositionally biased stretch (basic and acidic residues) spans 522 to 538 (TKDKEKNKEKKFKEFVR). Basic residues predominate over residues 539–551 (VKPKKKKKKKKKT). Residues 654–700 (RCICEVQEENDFMIQCEECQCWQHGVCMGLLEENVPEKYTCYVCQDP) form a PHD-type zinc finger. Lysine 843 bears the N6-acetyllysine mark. Residues 866–912 (DAVNPLHENGDDSLSPRLGWPLDQDRSKGDSDPKPGSPKVKEYVSKK) form a disordered region. 2 positions are modified to phosphoserine: serine 878 and serine 880. Over residues 888 to 912 (DQDRSKGDSDPKPGSPKVKEYVSKK) the composition is skewed to basic and acidic residues.

As to quaternary structure, homodimer; disulfide-linked. Component of some MLL1/MLL complex, at least composed of the core components KMT2A/MLL1, ASH2L, HCFC1, WDR5 and RBBP5, as well as the facultative components BACC1, CHD8, E2F6, HSP70, INO80C, KANSL1, LAS1L, MAX, MCRS1, MGA, KAT8/MOF, PELP1, PHF20, PRP31, RING2, RUVB1/TIP49A, RUVB2/TIP49B, SENP3, TAF1, TAF4, TAF6, TAF7, TAF9 and TEX10. Component of the NSL complex at least composed of MOF/KAT8, KANSL1, KANSL2, KANSL3, MCRS1, PHF20, OGT1/OGT, WDR5 and HCFC1. In terms of processing, ubiquitinated by TRIM26; leading to proteasomal degradation. As to expression, expressed in heart, kidney, liver, lung, pancreas, placenta, spleen and testis. Not expressed in brain, skeletal muscle, colon, ovary, prostate, small intestine and thymus. Expressed in colon and ovary cancer cell lines while it is not expressed in the respective normal tissues.

It localises to the nucleus. Functionally, methyllysine-binding protein, component of the MOF histone acetyltransferase protein complex. Not required for maintaining the global histone H4 'Lys-16' acetylation (H4K16ac) levels or locus specific histone acetylation, but instead works downstream in transcriptional regulation of MOF target genes. As part of the NSL complex it may be involved in acetylation of nucleosomal histone H4 on several lysine residues. Contributes to methyllysine-dependent p53/TP53 stabilization and up-regulation after DNA damage. The sequence is that of PHD finger protein 20 (PHF20) from Homo sapiens (Human).